A 171-amino-acid chain; its full sequence is MTNFTFDGAHSSLEFQIKHLMVSKVKGSFDQFDVAVEGDINDFSTLKATATIIPSSINTKNEARDNHLKSGDFFGTDEFDKITFVTKSITESKVVGDLTIKGITNEETFDVEFNGVSKNPMDGSQVTGIIVTGIINREKYGINFNQTLETGGVMLGKDVKFEASAEFSISE.

It belongs to the UPF0312 family.

The chain is UPF0312 protein SAR2769 from Staphylococcus aureus (strain MRSA252).